The following is a 284-amino-acid chain: Rubber cis-polyprenyltransferase HRT2 (284 aa).

The active site involves D41.

Belongs to the UPP synthase family. As to expression, predominantly expressed in latex.

The catalysed reaction is (cis-prenyl)(n)-diphosphate + isopentenyl diphosphate = (cis-prenyl)(n+1)-diphosphate + diphosphate. In terms of biological role, proposed to be involved in rubber biosynthesis as a particle-bound rubber transferase responsible for the cis-1,4-polymerization of isoprene subunits. Probably requires additional factors for the production of high molecular mass rubber. The polypeptide is Rubber cis-polyprenyltransferase HRT2 (HRT2) (Hevea brasiliensis (Para rubber tree)).